A 217-amino-acid chain; its full sequence is Mediator of RNA polymerase II transcription subunit 18 (217 aa).

The protein belongs to the Mediator complex subunit 18 family. In terms of assembly, component of the Mediator complex, which includes at least CDK8, MED4, MED6, MED11, MED14, MED17, MED18, MED20, MED21, MED22, MED27, MED28, MED30 and MED31.

It is found in the nucleus. In terms of biological role, component of the Mediator complex, a coactivator involved in the regulated transcription of nearly all RNA polymerase II-dependent genes. Mediator functions as a bridge to convey information from gene-specific regulatory proteins to the basal RNA polymerase II transcription machinery. Mediator is recruited to promoters by direct interactions with regulatory proteins and serves as a scaffold for the assembly of a functional preinitiation complex with RNA polymerase II and the general transcription factors. The protein is Mediator of RNA polymerase II transcription subunit 18 (MED18) of Drosophila melanogaster (Fruit fly).